A 374-amino-acid chain; its full sequence is Anhydro-N-acetylmuramic acid kinase (374 aa).

12-19 is a binding site for ATP; sequence GTSLDGID.

It belongs to the anhydro-N-acetylmuramic acid kinase family.

It carries out the reaction 1,6-anhydro-N-acetyl-beta-muramate + ATP + H2O = N-acetyl-D-muramate 6-phosphate + ADP + H(+). The protein operates within amino-sugar metabolism; 1,6-anhydro-N-acetylmuramate degradation. It functions in the pathway cell wall biogenesis; peptidoglycan recycling. Catalyzes the specific phosphorylation of 1,6-anhydro-N-acetylmuramic acid (anhMurNAc) with the simultaneous cleavage of the 1,6-anhydro ring, generating MurNAc-6-P. Is required for the utilization of anhMurNAc either imported from the medium or derived from its own cell wall murein, and thus plays a role in cell wall recycling. The polypeptide is Anhydro-N-acetylmuramic acid kinase (Sodalis glossinidius (strain morsitans)).